Reading from the N-terminus, the 133-residue chain is Agouti-signaling protein (133 aa).

Residues 1–22 form the signal peptide; the sequence is MDVSRLLLATLLVCLCFLTAYS. Residue Asn39 is glycosylated (N-linked (GlcNAc...) asparagine). The interval 56–95 is disordered; it reads NKKSKKISRNEAEKKKRPSKRKAPMKNVARTRPPPPTPCV. A compositionally biased stretch (basic residues) spans 70-79; that stretch reads KKRPSKRKAP. 5 cysteine pairs are disulfide-bonded: Cys94–Cys109, Cys101–Cys115, Cys108–Cys126, Cys112–Cys133, and Cys117–Cys124. The region spanning 94–133 is the Agouti domain; the sequence is CVATRDSCKPPAPACCDPCAFCQCRFFRSACSCRVLNPTC.

The protein resides in the secreted. In terms of biological role, involved in the regulation of melanogenesis. The binding of ASP to MC1R precludes alpha-MSH initiated signaling and thus blocks production of cAMP, leading to a down-regulation of eumelanogenesis (brown/black pigment) and thus increasing synthesis of pheomelanin (yellow/red pigment). This chain is Agouti-signaling protein (ASIP), found in Bos taurus (Bovine).